The sequence spans 341 residues: MVSSQPKYDLIREVGRGSYGVVYEAVIRKTSARVAVKKIRCHAPENVELALREFWALSSIKSQHPNVIHLEECILQKDGMVQKMSHGSNSSLYLQLVETSLKGEIAFDPRSAYYLWFVMDFCDGGDMNEYLLSRKPNRKTNTSFMLQLSSALAFLHKNQIIHRDLKPDNILISQSRMDTSDLEPTLKVADFGLSKVCSASGQNPEEPVSVNKCFLSTACGTDFYMAPEVWEGHYTAKADIFALGIIIWAMLERITFIDTETKKELLGSYVKQGTEIVPVGEALLENPKMELLIPVKKKSMNGRMKQLIKEMLAANPQDRPDAFELELRLVQIAFKDSSWET.

Residues 8–334 (YDLIREVGRG…LELRLVQIAF (327 aa)) form the Protein kinase domain. ATP is bound by residues 14 to 22 (VGRGSYGVV) and Lys-37. Asp-164 acts as the Proton acceptor in catalysis.

It belongs to the protein kinase superfamily. Ser/Thr protein kinase family.

The protein resides in the nucleus. The catalysed reaction is L-seryl-[protein] + ATP = O-phospho-L-seryl-[protein] + ADP + H(+). It carries out the reaction L-threonyl-[protein] + ATP = O-phospho-L-threonyl-[protein] + ADP + H(+). In Mus musculus (Mouse), this protein is Serine/threonine-protein kinase PDIK1L (Pdik1l).